Consider the following 930-residue polypeptide: MTTDFARHDLAQNSNSASEPDRVRVIREGVASYLPDIDPEETSEWLESFDTLLQRCGPSRARYLMLRLLERAGEQRVAIPALTSTDYVNTIPTELEPWFPGDEDVERRYRAWIRWNAAIMVHRAQRPGVGVGGHISTYASSAALYEVGFNHFFRGKSHPGGGDQVFIQGHASPGIYARAFLEGRLTAEQLDGFRQEHSHVGGGLPSYPHPRLMPDFWEFPTVSMGLGPLNAIYQARFNHYLHDRGIKDTSDQHVWCFLGDGEMDEPESRGLAHVGALEGLDNLTFVINCNLQRLDGPVRGNGKIIQELESFFRGAGWNVIKVVWGREWDALLHADRDGALVNLMNTTPDGDYQTYKANDGGYVRDHFFGRDPRTKALVENMSDQDIWNLKRGGHDYRKVYAAYRAAVDHKGQPTVILAKTIKGYALGKHFEGRNATHQMKKLTLEDLKEFRDTQRIPVSDAQLEENPYLPPYYHPGLNAPEIRYMLDRRRALGGFVPERRTKSKALTLPGRDIYAPLKKGSGHQEVATTMATVRTFKEVLRDKQIGPRIVPIIPDEARTFGMDSWFPSLKIYNRNGQLYTAVDADLMLAYKESEVGQILHEGINEAGSVGSFIAAGTSYATHNEPMIPIYIFYSMFGFQRTGDSFWAAADQMARGFVLGATAGRTTLTGEGLQHADGHSLLLAATNPAVVAYDPAFAYEIAYIVESGLARMCGENPENIFFYITVYNEPYVQPPEPENFDPEGVLRGIYRYHAATEQRTNKAQILASGVAMPAALRAAQMLAAEWDVAADVWSVTSWGELNRDGVAIETEKLRHPDRPAGVPYVTRALENARGPVIAVSDWMRAVPEQIRPWVPGTYLTLGTDGFGFSDTRPAARRYFNTDAESQVVAVLEALAGDGEIDPSVPVAAARQYRIDDVAAAPEQTTDPGPGA.

Positions 1–10 (MTTDFARHDL) are enriched in basic and acidic residues. Residues 1–21 (MTTDFARHDLAQNSNSASEPD) form a disordered region. K375 participates in a covalent cross-link: Isoglutamyl lysine isopeptide (Lys-Gln) (interchain with Q-Cter in protein Pup).

Homodimer. Part of the PDH complex, consisting of multiple copies of AceE (E1), DlaT (E2) and Lpd (E3). Requires Mg(2+) as cofactor. Thiamine diphosphate serves as cofactor.

It carries out the reaction N(6)-[(R)-lipoyl]-L-lysyl-[protein] + pyruvate + H(+) = N(6)-[(R)-S(8)-acetyldihydrolipoyl]-L-lysyl-[protein] + CO2. In terms of biological role, component of the pyruvate dehydrogenase (PDH) complex, that catalyzes the overall conversion of pyruvate to acetyl-CoA and CO(2). AceE has reductase activity with pyruvate but does not react with 2-oxoglutarate. The sequence is that of Pyruvate dehydrogenase E1 component (aceE) from Mycobacterium tuberculosis (strain ATCC 25618 / H37Rv).